Consider the following 101-residue polypeptide: Replication restart protein PriB (101 aa).

One can recognise an SSB domain in the interval 1 to 101 (MTTNNLVLSG…IHAENVELKT (101 aa)).

The protein belongs to the PriB family. As to quaternary structure, homodimer. Interacts with PriA and DnaT. Component of the replication restart primosome. Primosome assembly occurs via a 'hand-off' mechanism. PriA binds to replication forks, subsequently PriB then DnaT bind; DnaT then displaces ssDNA to generate the helicase loading substrate.

Its function is as follows. Involved in the restart of stalled replication forks, which reloads the replicative helicase on sites other than the origin of replication; the PriA-PriB pathway is the major replication restart pathway. During primosome assembly it facilitates complex formation between PriA and DnaT on DNA; stabilizes PriA on DNA. Stimulates the DNA unwinding activity of PriA helicase. The chain is Replication restart protein PriB from Shewanella oneidensis (strain ATCC 700550 / JCM 31522 / CIP 106686 / LMG 19005 / NCIMB 14063 / MR-1).